Consider the following 496-residue polypeptide: Cyclin-dependent kinase 16 (496 aa).

The segment at 1 to 95 is disordered; sequence MDRMKKIKRQ…SATSSDEVQS (95 aa). Ser12 is subject to Phosphoserine; by BRSK2. Ser36, Ser42, Ser64, Ser65, Ser78, Ser82, and Ser89 each carry phosphoserine. Residues 69–78 are compositionally biased toward basic and acidic residues; sequence IVHEDMKMGS. A compositionally biased stretch (polar residues) spans 83-93; it reads DQASATSSDEV. Phosphoserine; by CDK5 is present on Ser95. Phosphoserine occurs at positions 110, 119, 138, 146, 153, and 155. The region spanning 165-446 is the Protein kinase domain; the sequence is YIKLDKLGEG…AEDARKHPFF (282 aa). Residues 171–179 and Lys194 each bind ATP; that span reads LGEGTYATV. The residue at position 175 (Thr175) is a Phosphothreonine. The active-site Proton acceptor is Asp286. At Thr380 the chain carries Phosphothreonine. Phosphoserine is present on residues Ser391, Ser478, and Ser480.

It belongs to the protein kinase superfamily. CMGC Ser/Thr protein kinase family. CDC2/CDKX subfamily. As to quaternary structure, found in a complex containing CABLES1, CDK17 and TDRD7. Interacts with BRSK2. Identified in a complex with NSF, syntaxin-1, synaptotagmin, SYN1, SYP and CDK5R1. Interacts with YWHAH, YWHAQ and YWHAZ. Interacts with CCNY; this interaction increases the CDK16 kinase activity. Interacts with CCNYL1; this interaction mutually increases the stability of CDK16 and CCNYL1 and increases the kinase activity of CDK16. Interacts with NSF. Phosphorylation of CDK16 is essential for the binding of CCNY, but also essential for the regulation of CDK16 kinase activity. Phosphorylation of CDK16 is essential for the binding of CCNYl1, but also essential for the regulation of CDK16 kinase activity. Ser-146 and Ser-153 are the critical sites for the binding of CCNYL1 and for modulating CDK16 kinase activity. Phosphorylation at Ser-153 inhibits kinase activity. Highly expressed in testis and brain, and detected at lower levels in heart, skeletal muscle, adipose tissue, lung, spleen and pancreas (at protein level). Ubiquitous with highest levels in testis and brain, with longer form predominant in all tissues except the testis.

Its subcellular location is the cytoplasm. It localises to the cytoplasmic vesicle. It is found in the secretory vesicle. The protein resides in the cell membrane. The protein localises to the synapse. Its subcellular location is the synaptosome. It carries out the reaction L-seryl-[protein] + ATP = O-phospho-L-seryl-[protein] + ADP + H(+). It catalyses the reaction L-threonyl-[protein] + ATP = O-phospho-L-threonyl-[protein] + ADP + H(+). Its function is as follows. Protein kinase that plays a role in vesicle-mediated transport processes and exocytosis. Can phosphorylate CCNY at 'Ser-336' (in vitro). Plays a role in the regulation of insulin secretion in response to changes in blood glucose levels. Regulates GH1 release by brain neurons. Phosphorylates NSF, and thereby regulates NSF oligomerization. Required for normal spermatogenesis. Regulates neuron differentiation and dendrite development. This is Cyclin-dependent kinase 16 (Cdk16) from Mus musculus (Mouse).